The chain runs to 139 residues: Actin-depolymerizing factor 3 (139 aa).

In terms of domain architecture, ADF-H spans Gly7 to Arg139.

It belongs to the actin-binding proteins ADF family. Expressed in all tissues except pollen.

It localises to the cytoplasm. Its function is as follows. Actin-depolymerizing protein. Severs actin filaments (F-actin) and binds to actin monomers. This Zea mays (Maize) protein is Actin-depolymerizing factor 3 (ADF3).